A 1705-amino-acid polypeptide reads, in one-letter code: Receptor-type tyrosine-protein phosphatase V (1705 aa).

The first 18 residues, 1 to 18, serve as a signal peptide directing secretion; it reads MRPLILLAALLWLQDSLA. At 19 to 1077 the chain is on the extracellular side; that stretch reads QEDVCSSLDG…QASISLVAMP (1059 aa). Residues 24-44 are disordered; sequence SSLDGSPDRQGGGPPLSVSVT. 10 Fibronectin type-III domains span residues 37-129, 130-222, 218-305, 306-388, 393-454, 475-569, 565-654, 655-749, 744-831, and 832-926; these read PPLS…TAPT, VVRG…VPPD, PVPP…EWTY, PSYP…SIWL, ARPM…HYRV, PPQS…APPT, PAPP…TGWT, PPSA…TPNE, PLTP…VLSV, and EPGP…SAEV. Residues Asn74, Asn89, Asn117, Asn174, Asn239, Asn259, Asn299, Asn345, Asn431, Asn551, Asn570, Asn620, Asn649, Asn663, and Asn737 are each glycosylated (N-linked (GlcNAc...) asparagine). N-linked (GlcNAc...) asparagine glycosylation is found at Asn851, Asn882, Asn970, and Asn982. The helical transmembrane segment at 1078–1100 threads the bilayer; that stretch reads LTVMMGTVVGCIIIVCAVLCLLC. At 1101–1705 the chain is on the cytoplasmic side; the sequence is RRGLKGPRSE…LRNRLPRARK (605 aa). Tyrosine-protein phosphatase domains follow at residues 1150–1409 and 1427–1695; these read FFQE…LLNK and NFAQ…LNSA. Residues Asp1316, 1350-1356, and Gln1394 each bind substrate; that span reads CSAGVGR. Cys1350 (phosphocysteine intermediate) is an active-site residue.

The protein belongs to the protein-tyrosine phosphatase family. Receptor class 3 subfamily.

It localises to the membrane. It carries out the reaction O-phospho-L-tyrosyl-[protein] + H2O = L-tyrosyl-[protein] + phosphate. In terms of biological role, protein tyrosine phosphatase that acts as a regulator of energy metabolism by mediating dephosphorylation of insulin receptor (Insr). Prevents decarboxylation of osteocalcin (Bglap and Bglap2) via an indirect mechanism: dephosphorylation of insulin receptor prevents insulin signaling-dependent decarboxylation of osteocalcin, preventing the hormone activity of osteocalcin. May play a role in the maintenance of pluripotency. The chain is Receptor-type tyrosine-protein phosphatase V (Ptprv) from Mus musculus (Mouse).